Reading from the N-terminus, the 523-residue chain is Transmembrane protein 266 (523 aa).

Residues methionine 1–serine 94 lie on the Cytoplasmic side of the membrane. Residues phenylalanine 95 to isoleucine 115 form a helical membrane-spanning segment. At lysine 116–serine 121 the chain is on the extracellular side. Residues serine 122–phenylalanine 142 traverse the membrane as a helical segment. Residues serine 143 to lysine 161 are Cytoplasmic-facing. Residues isoleucine 162 to valine 182 traverse the membrane as a helical segment. Over alanine 183–aspartate 191 the chain is Extracellular. Residues alanine 192 to valine 212 form a helical membrane-spanning segment. Topologically, residues leucine 213–alanine 523 are cytoplasmic. Residues glutamate 218–glutamate 270 are a coiled coil. The segment at serine 380 to phenylalanine 477 is disordered. Over residues serine 382 to leucine 397 the composition is skewed to low complexity. Positions glycine 398–serine 411 are enriched in polar residues. Pro residues predominate over residues leucine 421 to alanine 430.

In terms of assembly, homodimer; disulfide-linked. In terms of tissue distribution, mainly expressed in the cerebellum. Also expressed in cerebral cortex, skeletal muscle and thyroid, but at much lower levels.

It localises to the cell membrane. The protein resides in the cell projection. The protein localises to the dendrite. Its subcellular location is the perikaryon. Voltage-sensor protein present on the post-synaptic side of glutamatergic mossy fibers and granule cells in the cerebellum. Despite the presence of a voltage-sensor segment, does not form a functional ion channel and its precise role remains unclear. Undergoes both rapid and slow structural rearrangements in response to changes in voltage. Contains a zinc-binding site that can regulate the slow conformational transition. This Homo sapiens (Human) protein is Transmembrane protein 266.